Reading from the N-terminus, the 245-residue chain is Probable ABC transporter ATP-binding protein p29 (245 aa).

In terms of domain architecture, ABC transporter spans 7–245 (LSFEKVSIIY…KEQLYKIYDN (239 aa)). 39–46 (GKSGVGKS) is an ATP binding site.

Belongs to the ABC transporter superfamily.

Its function is as follows. Part of a high-affinity transport system. This Mycoplasma genitalium (strain ATCC 33530 / DSM 19775 / NCTC 10195 / G37) (Mycoplasmoides genitalium) protein is Probable ABC transporter ATP-binding protein p29 (p29).